Consider the following 293-residue polypeptide: uncharacterized protein (293 aa).

Active-site charge relay system residues include Thr-43 and Tyr-105. Residue Tyr-131 is the Proton donor of the active site. Lys-159 serves as the catalytic Schiff-base intermediate with substrate.

Belongs to the DapA family. As to quaternary structure, homotetramer.

It localises to the cytoplasm. This is an uncharacterized protein from Thermococcus onnurineus (strain NA1).